Reading from the N-terminus, the 318-residue chain is NADH-ubiquinone oxidoreductase chain 1 (318 aa).

The next 8 membrane-spanning stretches (helical) occupy residues 1 to 21 (MLPITNSLTYIIPILIAVAFL), 71 to 91 (LLILSPILALTTAMLIWTPIP), 101 to 121 (LGLLSILAISSMAVNSTLWAG), 145 to 165 (VTLGIILLSILILTGGFTMQL), 172 to 192 (HIWLLTTSWPLTMMWFISTLA), 224 to 244 (FFLAEYTNIISMNLLTCIMFI), 253 to 273 (ELFLINLVTKTLLLSLTFLWI), and 294 to 314 (LPLTMALCLLQASLLVSISGI).

It belongs to the complex I subunit 1 family.

It localises to the mitochondrion inner membrane. It catalyses the reaction a ubiquinone + NADH + 5 H(+)(in) = a ubiquinol + NAD(+) + 4 H(+)(out). In terms of biological role, core subunit of the mitochondrial membrane respiratory chain NADH dehydrogenase (Complex I) that is believed to belong to the minimal assembly required for catalysis. Complex I functions in the transfer of electrons from NADH to the respiratory chain. The immediate electron acceptor for the enzyme is believed to be ubiquinone. The polypeptide is NADH-ubiquinone oxidoreductase chain 1 (MT-ND1) (Varanus rudicollis (Rough-necked monitor lizard)).